Here is a 46-residue protein sequence, read N- to C-terminus: Endochitinase 4 (46 aa).

The protein belongs to the glycosyl hydrolase 19 family. Chitinase class I subfamily.

The enzyme catalyses Random endo-hydrolysis of N-acetyl-beta-D-glucosaminide (1-&gt;4)-beta-linkages in chitin and chitodextrins.. Defense against chitin-containing fungal and bacterial pathogens. This chain is Endochitinase 4, found in Arachis hypogaea (Peanut).